Here is a 571-residue protein sequence, read N- to C-terminus: E3 ubiquitin-protein ligase ipaH3 (571 aa).

The interval 1 to 260 (MSIMLPINNN…SQQTAQPDYH (260 aa)) is interaction with target proteins. LRR repeat units lie at residues 58-81 (INQF…LPPQ), 83-99 (TVLE…PELP), 100-119 (ASLE…PELP), 120-144 (ASLK…LLEY), 146-159 (NADN…PELP), 160-184 (TSLE…SLEA), 186-202 (DVST…PVRN), 205-229 (SEET…ILSL), and 232-260 (TCTI…PDYH). The interval 269-278 (SDGQQNTLHR) is linker. The NEL domain occupies 279 to 571 (PLADAVTAWF…SENGSQLHHS (293 aa)). The interval 279–571 (PLADAVTAWF…SENGSQLHHS (293 aa)) is E3 ubiquitin-protein ligase catalytic domain. C363 acts as the Glycyl thioester intermediate in catalysis.

This sequence belongs to the LRR-containing bacterial E3 ligase family. In terms of processing, ubiquitinated in the presence of host E1 ubiquitin-activating enzyme, E2 ubiquitin-conjugating enzyme UBE2D3 and ubiquitin.

It localises to the secreted. The protein localises to the host cytoplasm. The enzyme catalyses S-ubiquitinyl-[E2 ubiquitin-conjugating enzyme]-L-cysteine + [acceptor protein]-L-lysine = [E2 ubiquitin-conjugating enzyme]-L-cysteine + N(6)-ubiquitinyl-[acceptor protein]-L-lysine.. Functionally, effector proteins function to alter host cell physiology and promote bacterial survival in host tissues. This protein is an E3 ubiquitin ligase that interferes with host's ubiquitination pathway. Synthesizes a 'Lys-48'-linked ubiquitin chain, which requires non-covalent binding between ubiquitin and the host ubiquitin-conjugating enzyme UBE2D1. In Shigella flexneri, this protein is E3 ubiquitin-protein ligase ipaH3 (ipaH3).